Here is a 434-residue protein sequence, read N- to C-terminus: Solute carrier RCH1 (434 aa).

The Cytoplasmic segment spans residues 1–15 (MKTQYSLIRKIWAHS). A helical membrane pass occupies residues 16–36 (VTEFLKSQWFFICLAILIVIA). Residues 37–50 (RFAPNFARDGGLIK) are Extracellular-facing. The helical transmembrane segment at 51–71 (GQYSIGYGCVAWIFLQSGLGM) threads the bilayer. Topologically, residues 72–87 (KSRSLMANMLNWRAHA) are cytoplasmic. A helical membrane pass occupies residues 88-108 (TILVLSFLITSSIVYGFCCAV). Residues 109–118 (KAANDPKIDD) are Extracellular-facing. A helical membrane pass occupies residues 119-139 (WVLIGLILTATCPTTVASNVI). At 140 to 149 (MTTNAGGNSL) the chain is on the cytoplasmic side. Residues 150–170 (LCVCEVFIGNLLGAFITPALV) traverse the membrane as a helical segment. Topologically, residues 171–199 (QMFTNRAPFAYGNPATGNGIGALYGRVMK) are extracellular. The helical transmembrane segment at 200–220 (QVGLSVFVPLFVGQVIQNCFP) threads the bilayer. Topologically, residues 221-234 (KGTAYYLGFLKKYH) are cytoplasmic. The chain crosses the membrane as a helical span at residues 235 to 255 (IKIGSYMLLLIMFSSFSTAFY). Over 256–264 (QDAFTSVSH) the chain is Extracellular. The helical transmembrane segment at 265 to 285 (VCIIFLCFFNLGIYIFFTGLS) threads the bilayer. Residues 286-327 (YLCARPWFILKLFPHEPIEGKSTRLYRYSYNIFRPFYYSKED) are Cytoplasmic-facing. The helical transmembrane segment at 328–348 (AICIMFCGPAKTAALGVSLIT) threads the bilayer. Residues 349–362 (SQYGDKKEHLGKLL) are Extracellular-facing. The chain crosses the membrane as a helical span at residues 363 to 383 (VPLVLYQVEQVMTANFFVSLF). At 384–434 (KRWIQKDAQADGSESSCANENEEVDLEKIISIGTGENQSVLSNNVPYTQPR) the chain is on the cytoplasmic side. Position 425 is a phosphoserine (Ser-425).

It belongs to the bile acid:sodium symporter (BASS) (TC 2.A.28) family.

The protein localises to the cell membrane. It is found in the bud neck. In terms of biological role, solute carrier protein that negatively regulates the cytosolic calcium homeostasis in response to high levels of extracellular calcium. This Saccharomyces cerevisiae (strain ATCC 204508 / S288c) (Baker's yeast) protein is Solute carrier RCH1.